Reading from the N-terminus, the 190-residue chain is Threonylcarbamoyl-AMP synthase (190 aa).

Residues 7-190 enclose the YrdC-like domain; the sequence is GDAIAAAIDV…ALTGELFRQG (184 aa).

Belongs to the SUA5 family. TsaC subfamily.

The protein localises to the cytoplasm. It catalyses the reaction L-threonine + hydrogencarbonate + ATP = L-threonylcarbamoyladenylate + diphosphate + H2O. Required for the formation of a threonylcarbamoyl group on adenosine at position 37 (t(6)A37) in tRNAs that read codons beginning with adenine. Catalyzes the conversion of L-threonine, HCO(3)(-)/CO(2) and ATP to give threonylcarbamoyl-AMP (TC-AMP) as the acyladenylate intermediate, with the release of diphosphate. The chain is Threonylcarbamoyl-AMP synthase from Shigella dysenteriae serotype 1 (strain Sd197).